We begin with the raw amino-acid sequence, 371 residues long: MSQTEIVKKPKHKRFKRPDKSRFVQQTLPAWQFIFTPWTVLPLLFLLGIVFAPLGAGMFVASRRVKELRIDYTDCMNIGDEFKQVPSTNIEFQYKNVKNVTAMWKSSGDVCTLRFQIPEEMTSPVFAFYRLKNFYQNHRRYTVSADMFQLLGEARTVAQLKSYGFCKPLEANEEGKPYYPCGIIANSLFNDSYSSLLRYESFDSSNSLGLYNMTTNGTAWPEDRERYKKTKYNASQIVPPPNWAKMFPNGYTDDNIPDVSTWDAFQIWMRAAALPTFSKLALRNVTTALQPGIYEMNITYNFPVTEYKGTKTIMFSTTSVIGGKNYFLGILYFVIGGLCAASGVILSIACLIKPRRVGDPRYLSWNRGKSS.

Topologically, residues 1-39 are cytoplasmic; the sequence is MSQTEIVKKPKHKRFKRPDKSRFVQQTLPAWQFIFTPWT. The helical transmembrane segment at 40–60 threads the bilayer; that stretch reads VLPLLFLLGIVFAPLGAGMFV. Over 61–325 the chain is Extracellular; it reads ASRRVKELRI…STTSVIGGKN (265 aa). 2 cysteine pairs are disulfide-bonded: C75–C111 and C166–C181. N99 carries an N-linked (GlcNAc...) asparagine glycan. Residues N190, N212, N216, N233, N284, and N297 are each glycosylated (N-linked (GlcNAc...) asparagine). Residues 326 to 346 form a helical membrane-spanning segment; it reads YFLGILYFVIGGLCAASGVIL. At 347–371 the chain is on the cytoplasmic side; sequence SIACLIKPRRVGDPRYLSWNRGKSS.

Belongs to the CDC50/LEM3 family.

The protein resides in the endoplasmic reticulum membrane. Accessory component of a P4-ATPase flippase complex which catalyzes the hydrolysis of ATP coupled to the transport of aminophospholipids from the lumenal to the cytosolic leaflet of membranes and ensures the maintenance of asymmetric distribution of phospholipids. This is Phospholipid-transporting ATPase accessory subunit ivn1 (ivn1) from Schizosaccharomyces pombe (strain 972 / ATCC 24843) (Fission yeast).